The chain runs to 421 residues: Monopolin complex subunit mde4 (421 aa).

2 disordered regions span residues 122–158 (QKSN…NKDE) and 224–316 (DRKL…MTVS). The segment covering 133–149 (VSQNRLRGSLDTVSSPS) has biased composition (polar residues). The span at 224 to 238 (DRKLRMQKKSTERKS) shows a compositional bias: basic and acidic residues. Positions 262–287 (RQPNATSGSPLSVTPFLQKTSTSIGL) are enriched in polar residues. Residues 288 to 304 (SSSPPQSSPSAQSSQPF) are compositionally biased toward low complexity.

In terms of assembly, component of a monopolin-like complex composed of pcs1 and mde4. The complex associates with the kinetochore.

The protein resides in the nucleus. Its subcellular location is the chromosome. The protein localises to the centromere. The monopolin-like pcs1/mde4 complex is essential for accurate chromosome segregation during mitosis and meiosis II. May clamp together microtubule binding sites on the same kinetochore, preventing merotelic attachment of microtubules. The polypeptide is Monopolin complex subunit mde4 (mde4) (Schizosaccharomyces pombe (strain 972 / ATCC 24843) (Fission yeast)).